We begin with the raw amino-acid sequence, 477 residues long: Methylenetetrahydrofolate--tRNA-(uracil-5-)-methyltransferase TrmFO (477 aa).

FAD is bound at residue 14-19 (GGGLAG).

It belongs to the MnmG family. TrmFO subfamily. The cofactor is FAD.

It is found in the cytoplasm. It carries out the reaction uridine(54) in tRNA + (6R)-5,10-methylene-5,6,7,8-tetrahydrofolate + NADH + H(+) = 5-methyluridine(54) in tRNA + (6S)-5,6,7,8-tetrahydrofolate + NAD(+). The catalysed reaction is uridine(54) in tRNA + (6R)-5,10-methylene-5,6,7,8-tetrahydrofolate + NADPH + H(+) = 5-methyluridine(54) in tRNA + (6S)-5,6,7,8-tetrahydrofolate + NADP(+). Its function is as follows. Catalyzes the folate-dependent formation of 5-methyl-uridine at position 54 (M-5-U54) in all tRNAs. This Rhizobium johnstonii (strain DSM 114642 / LMG 32736 / 3841) (Rhizobium leguminosarum bv. viciae) protein is Methylenetetrahydrofolate--tRNA-(uracil-5-)-methyltransferase TrmFO.